A 1254-amino-acid polypeptide reads, in one-letter code: Zinc finger protein BRUTUS-like At1g18910 (1254 aa).

The segment at M1 to S30 is disordered. A helical membrane pass occupies residues I454–P474. Residues P1013–S1082 form a CHY-type zinc finger. Zn(2+) contacts are provided by C1020, H1022, C1033, C1034, C1040, C1043, H1044, H1050, C1062, C1065, C1075, C1080, C1089, C1092, H1103, C1104, C1107, C1110, H1122, C1123, C1126, C1129, H1137, and C1139. The CTCHY-type zinc-finger motif lies at M1084–N1147. The RING-type; atypical zinc finger occupies C1148–S1190.

In terms of assembly, binds zinc and iron ions.

It is found in the membrane. Its subcellular location is the nucleus. It participates in protein modification; protein ubiquitination. Functionally, probable E3 ubiquitin-protein ligase that may regulate the response to iron deficiency and thus contributes to iron homeostasis. This chain is Zinc finger protein BRUTUS-like At1g18910, found in Arabidopsis thaliana (Mouse-ear cress).